Here is a 273-residue protein sequence, read N- to C-terminus: Shikimate dehydrogenase (NADP(+)) (273 aa).

Shikimate-binding positions include 19-21 (SKS) and Thr66. Lys70 functions as the Proton acceptor in the catalytic mechanism. Asn91 and Asp107 together coordinate shikimate. NADP(+)-binding positions include 131-135 (GAGGA) and Met218. Shikimate is bound at residue Tyr220. Gly242 provides a ligand contact to NADP(+).

This sequence belongs to the shikimate dehydrogenase family. As to quaternary structure, homodimer.

It catalyses the reaction shikimate + NADP(+) = 3-dehydroshikimate + NADPH + H(+). It functions in the pathway metabolic intermediate biosynthesis; chorismate biosynthesis; chorismate from D-erythrose 4-phosphate and phosphoenolpyruvate: step 4/7. Involved in the biosynthesis of the chorismate, which leads to the biosynthesis of aromatic amino acids. Catalyzes the reversible NADPH linked reduction of 3-dehydroshikimate (DHSA) to yield shikimate (SA). This is Shikimate dehydrogenase (NADP(+)) from Buchnera aphidicola subsp. Acyrthosiphon pisum (strain 5A).